Reading from the N-terminus, the 421-residue chain is Enolase (421 aa).

Gln-162 provides a ligand contact to (2R)-2-phosphoglycerate. Glu-204 serves as the catalytic Proton donor. Mg(2+) is bound by residues Asp-241, Glu-284, and Asp-311. 4 residues coordinate (2R)-2-phosphoglycerate: Lys-336, Arg-365, Ser-366, and Lys-387. The Proton acceptor role is filled by Lys-336.

The protein belongs to the enolase family. It depends on Mg(2+) as a cofactor.

The protein localises to the cytoplasm. Its subcellular location is the secreted. It localises to the cell surface. The enzyme catalyses (2R)-2-phosphoglycerate = phosphoenolpyruvate + H2O. It functions in the pathway carbohydrate degradation; glycolysis; pyruvate from D-glyceraldehyde 3-phosphate: step 4/5. Functionally, catalyzes the reversible conversion of 2-phosphoglycerate (2-PG) into phosphoenolpyruvate (PEP). It is essential for the degradation of carbohydrates via glycolysis. The polypeptide is Enolase (Nautilia profundicola (strain ATCC BAA-1463 / DSM 18972 / AmH)).